An 885-amino-acid chain; its full sequence is Leucine--tRNA ligase (885 aa).

The 'HIGH' region motif lies at 53–63 (PYPSGKLHMGH). The short motif at 631-635 (KMSKS) is the 'KMSKS' region element. Lys634 is a binding site for ATP.

Belongs to the class-I aminoacyl-tRNA synthetase family.

It localises to the cytoplasm. It catalyses the reaction tRNA(Leu) + L-leucine + ATP = L-leucyl-tRNA(Leu) + AMP + diphosphate. The sequence is that of Leucine--tRNA ligase from Psychrobacter sp. (strain PRwf-1).